The chain runs to 1071 residues: Exportin-1 (1071 aa).

Residues 46–112 (AQEVLTHLKE…KKYVVGLIIK (67 aa)) enclose the Importin N-terminal domain. HEAT repeat units follow at residues 217 to 240 (QNAP…PLGY), 241 to 277 (IFET…VSVS), 354 to 472 (MLLV…YVDT), 515 to 553 (RFLV…QYPR), 560 to 597 (KFLK…KCRR), and 602 to 639 (VQVG…AVGY). A necessary for interaction with Ran and nuclear export complex formation region spans residues 327–450 (CTFLKEHGQL…VREFMKDTDS (124 aa)). S391 bears the Phosphoserine mark. The interval 411–481 (TVLSKVRLLM…TEIIMTKKLQ (71 aa)) is necessary for interaction with RANBP3. N6-acetyllysine is present on K446. The residue at position 448 (T448) is a Phosphothreonine. S450 bears the Phosphoserine mark. Phosphotyrosine is present on Y454. Residue K693 is modified to N6-acetyllysine. HEAT repeat units lie at residues 775–813 (NFVP…KLGG), 885–916 (TMRN…SFYQ), and 917–954 (TYFC…NLVE). Phosphoserine is present on residues S966 and S1031. One copy of the HEAT 10 repeat lies at 1002–1039 (FSLNQDIPAFKEHLRDFLVQIKEFAGEDTSDLFLEERE).

It belongs to the exportin family. Found in a U snRNA export complex with PHAX/RNUXA, NCBP1/CBP80, NCBP2/CBP20, RAN, XPO1 and m7G-capped RNA. Component of a nuclear export receptor complex composed of KPNB1, RAN, SNUPN and XPO1. Found in a trimeric export complex with SNUPN, RAN and XPO1. Found in a nuclear export complex with RANBP3 and RAN. Found in a 60S ribosomal subunit export complex with NMD3, RAN, XPO1. Interacts with DDX3X, NMD3, NUP42, NUP88, NUP214, RANBP3 and TERT. Interacts with NEMF (via its N-terminus). Interacts with the monomeric form of BIRC5/survivin deacetylated at 'Lys-129'. Interacts with DTNBP1 and SERTAD2; the interactions translocate DTNBP1 and SERTAD2 out of the nucleus. Interacts with ATF2. Interacts with SLC35G1 and STIM1. Interacts with DCAF8. Interacts with CPEB3. Interacts with HAX1. Interacts with BOK; translocates to the cytoplasm. Interacts with HSP90AB1. Interacts with LRPPRC; interacts with LRPPRC alone and also when LRPPRC is in complex with EIF4E and with EIF4E sensitivity element (4ESE)-containing mRNAs to form an EIF4E-dependent mRNA export complex.

The protein resides in the cytoplasm. Its subcellular location is the nucleus. The protein localises to the nucleoplasm. It is found in the cajal body. It localises to the nucleolus. Functionally, mediates the nuclear export of cellular proteins (cargos) bearing a leucine-rich nuclear export signal (NES) and of RNAs. In the nucleus, in association with RANBP3, binds cooperatively to the NES on its target protein and to the GTPase Ran in its active GTP-bound form. Docking of this complex to the nuclear pore complex (NPC) is mediated through binding to nucleoporins. Upon transit of a nuclear export complex into the cytoplasm, disassembling of the complex and hydrolysis of Ran-GTP to Ran-GDP (induced by RANBP1 and RANGAP1, respectively) cause release of the cargo from the export receptor. The directionality of nuclear export is thought to be conferred by an asymmetric distribution of the GTP- and GDP-bound forms of Ran between the cytoplasm and nucleus. Involved in U3 snoRNA transport from Cajal bodies to nucleoli. Binds to late precursor U3 snoRNA bearing a TMG cap. The sequence is that of Exportin-1 (Xpo1) from Rattus norvegicus (Rat).